The primary structure comprises 387 residues: [LysW]-aminoadipate semialdehyde/glutamate semialdehyde transaminase (387 aa).

Pyridoxal 5'-phosphate contacts are provided by residues 96–97 (GT) and F123. R126 contributes to the substrate binding site. 207–210 (DEVQ) serves as a coordination point for pyridoxal 5'-phosphate. The residue at position 236 (K236) is an N6-(pyridoxal phosphate)lysine. A substrate-binding site is contributed by S264. T265 contacts pyridoxal 5'-phosphate.

The protein belongs to the class-III pyridoxal-phosphate-dependent aminotransferase family. LysJ subfamily. As to quaternary structure, homodimer. Pyridoxal 5'-phosphate is required as a cofactor.

The protein localises to the cytoplasm. It carries out the reaction [amino-group carrier protein]-C-terminal-gamma-(L-lysyl)-L-glutamate + 2-oxoglutarate = [amino-group carrier protein]-C-terminal-N-(1-carboxy-5-oxopentan-1-yl)-L-glutamine + L-glutamate. It catalyses the reaction [amino-group carrier protein]-C-terminal-gamma-(L-ornithyl)-L-glutamate + 2-oxoglutarate = [amino-group carrier protein]-C-terminal-gamma-(L-glutamyl-5-semialdehyde)-L-glutamate + L-glutamate. Its pathway is amino-acid biosynthesis; L-lysine biosynthesis via AAA pathway; L-lysine from L-alpha-aminoadipate (Thermus route): step 4/5. It functions in the pathway amino-acid biosynthesis; L-arginine biosynthesis. Involved in both the arginine and lysine biosynthetic pathways. This Sulfurisphaera tokodaii (strain DSM 16993 / JCM 10545 / NBRC 100140 / 7) (Sulfolobus tokodaii) protein is [LysW]-aminoadipate semialdehyde/glutamate semialdehyde transaminase.